We begin with the raw amino-acid sequence, 183 residues long: Adenine phosphoribosyltransferase (183 aa).

Belongs to the purine/pyrimidine phosphoribosyltransferase family. In terms of assembly, homodimer.

It localises to the cytoplasm. The catalysed reaction is AMP + diphosphate = 5-phospho-alpha-D-ribose 1-diphosphate + adenine. It functions in the pathway purine metabolism; AMP biosynthesis via salvage pathway; AMP from adenine: step 1/1. Its function is as follows. Catalyzes a salvage reaction resulting in the formation of AMP, that is energically less costly than de novo synthesis. This is Adenine phosphoribosyltransferase from Citrobacter koseri (strain ATCC BAA-895 / CDC 4225-83 / SGSC4696).